A 141-amino-acid chain; its full sequence is uncharacterized protein (141 aa).

Residues 24–52 (KVQTALQKEAKTIKREQKKIKDEIDTFKT) adopt a coiled-coil conformation.

This is an uncharacterized protein from Invertebrate iridescent virus 6 (IIV-6).